The sequence spans 261 residues: Thioesterase AMT4 (261 aa).

It belongs to the AMT4 thioesterase family.

Its pathway is mycotoxin biosynthesis. In terms of biological role, thioesterase; part of the gene clusters that mediate the biosynthesis of AM-toxins, host-selective toxins (HSTs) causing Alternaria blotch on apple, a worldwide distributed disease. AM-toxins are cyclic depsipeptides containing the 3 residues 2-hydroxy-isovaleric acid (2-HIV), dehydroalanine, L-alanine which are common for all 3 AM-toxins I to III. The fourth precursor is L-alpha-amino-methoxyphenyl-valeric acid (L-Amv) for AM-toxin I, L-alpha-amino-phenyl-valeric acid (L-Apv) for AM-toxin II, and L-alpha-amino-hydroxyphenyl-valeric acid (L-Ahv) for AM-toxin III. AM-toxins have two target sites for affecting susceptible apple cells; they cause invagination of the plasma membrane and electrolyte loss and chloroplast disorganization. The non-ribosomal peptide synthetase AMT1 contains 4 catalytic modules and is responsible for activation of each residue in AM-toxin. The aldo-keto reductase AMT2 catalyzes the conversion of 2-keto-isovaleric acid (2-KIV) to 2-hydroxy-isovaleric acid (2-HIV), one of the precursor residues incorporated by AMT1 during AM-toxin biosynthesis, by reduction of its ketone to an alcohol. The cytochrome P450 monooxygenase AMT3 and the thioesterase AMT4 are also important for AM-toxin production, but their exact function within the AM-toxin biosynthesis are not known yet. Up to 21 proteins (including AMT1 to AMT4) are predicted to be involved in AM-toxin biosynthesis since their expression ishighly up-regulated in AM-toxin-producing cultures. This chain is Thioesterase AMT4, found in Alternaria alternata (Alternaria rot fungus).